An 862-amino-acid polypeptide reads, in one-letter code: MAQPGPASQPDVSLQQRVAELEKINAEFLRAQQQLEQEFNQKRAKFKELYLAKEEDLKRQNAVLQAAQDDLGHLRTQLWEAQAEMENIKAIATVSENTKQEAIDEVKRQWREEVASLQAVMKETVRDYEHQFHLRLEQERTQWAQYRESAEREIADLRRRLSEGQEEENLENEMKKAQEDAEKLRSVVMPMEKEIAALKDKLTEAEDKIKELEASKVKELNHYLEAEKSCRTDLEMYVAVLNTQKSVLQEDAEKLRKELHEVCHLLEQERQQHNQLKHTWQKANDQFLESQRLLMRDMQRMEIVLTSEQLRQVEELKKKDQEDDEQQRLNKRKDHKKADVEEEIKIPVVCALTQEESSAQLSNEEEHLDSTRGSVHSLDAGLLLPSGDPFSKSDNDMFKDGLRRAQSTDSLGTSGSLQSKALGYNYKAKSAGNLDESDFGPLVGADSVSENFDTASLGSLQMPSGFMLTKDQERAIKAMTPEQEETASLLSSVTQGMESAYVSPSGYRLVSETEWNLLQKEVHNAGNKLGRRCDMCSNYEKQLQGIQIQEAETRDQVKKLQLMLRQANDQLEKTMKDKQELEDFIKQSSEDSSHQISALVLRAQASEILLEELQQGLSQAKRDVQEQMAVLMQSREQVSEELVRLQKDNDSLQGKHSLHVSLQQAEDFILPDTTEALRELVLKYREDIINVRTAADHVEEKLKAEILFLKEQIQAEQCLKENLEETLQLEIENCKEEIASISSLKAELERIKVEKGQLESTLREKSQQLESLQEIKISLEEQLKKETAAKATVEQLMFEEKNKAQRLQTELDVSEQVQRDFVKLSQTLQVQLERIRQADSLERIRAILNDTKLTDINQLPET.

A2 carries the post-translational modification N-acetylalanine. A coiled-coil region spans residues 11–345; that stretch reads DVSLQQRVAE…KKADVEEEIK (335 aa). N6-acetyllysine is present on K282. A disordered region spans residues 315-338; that stretch reads ELKKKDQEDDEQQRLNKRKDHKKA. Phosphoserine occurs at positions 374, 377, and 407. A Phosphothreonine modification is found at T408. Position 410 is a phosphoserine (S410). The interaction with AP1G1, AP1G2, GGA1, GGA2 and GGA3 stretch occupies residues 435–447; that stretch reads DESDFGPLVGADS. Positions 534-816 form a coiled coil; the sequence is DMCSNYEKQL…LQTELDVSEQ (283 aa).

Belongs to the rabaptin family. As to quaternary structure, homodimer when bound to RAB5A. Heterodimer with RABGEF1. The heterodimer binds RAB4A and RAB5A that have been activated by GTP-binding. Interacts with TSC2. Interacts with GGA1 (via GAE domain), GGA2 (via GAE domain) and GGA3 (via GAE domain). Interacts with AP1G1 (via GAE domain). Interacts with AP1G2 (via GAE domain). Interacts with ECPAS. Interacts with KCNH1. Interacts with PKD1 (via C-terminal domain) and GGA1; the interactions recruit PKD1:PKD2 complex to GGA1 and ARL3 at trans-Golgi network. Proteolytic cleavage by caspases in apoptotic cells causes loss of endosome fusion activity.

The protein localises to the cytoplasm. The protein resides in the early endosome. It is found in the recycling endosome. It localises to the cytoplasmic vesicle. Functionally, rab effector protein acting as linker between gamma-adaptin, RAB4A and RAB5A. Involved in endocytic membrane fusion and membrane trafficking of recycling endosomes. Involved in KCNH1 channels trafficking to and from the cell membrane. Stimulates RABGEF1 mediated nucleotide exchange on RAB5A. Mediates the traffic of PKD1:PKD2 complex from the endoplasmic reticulum through the Golgi to the cilium. The sequence is that of Rab GTPase-binding effector protein 1 (RABEP1) from Homo sapiens (Human).